The following is a 244-amino-acid chain: Agamous-like MADS-box protein MADS3 (244 aa).

One can recognise an MADS-box domain in the interval 1–61 (MGRGRVELKR…GKLYEFGSAG (61 aa)). Residues 85–175 (TQSWYQEVSK…KLKLEAEGQS (91 aa)) enclose the K-box domain. Residues 180–206 (QGSWNPSTATAGNSSFPVHPSQSNPMD) form a disordered region. The segment covering 181–204 (GSWNPSTATAGNSSFPVHPSQSNP) has biased composition (polar residues).

In terms of tissue distribution, expressed in flowers and seeds.

The protein localises to the nucleus. In terms of biological role, probable transcription factor involved in flower development. The protein is Agamous-like MADS-box protein MADS3 of Vitis vinifera (Grape).